We begin with the raw amino-acid sequence, 369 residues long: Phospho-N-acetylmuramoyl-pentapeptide-transferase (369 aa).

10 helical membrane passes run 2-22 (IALL…TPLF), 55-75 (TVVV…MFLM), 86-106 (ALIL…DDFI), 120-140 (AKLI…LNFP), 163-183 (LAFG…NLIV), 196-216 (LDGL…LMGI), 239-259 (PLDL…FLWW), 266-286 (IFMG…FAIL), 291-311 (LLLG…IIQV), and 348-368 (ILGG…WVVL).

Belongs to the glycosyltransferase 4 family. MraY subfamily. Requires Mg(2+) as cofactor.

The protein resides in the cell membrane. It carries out the reaction UDP-N-acetyl-alpha-D-muramoyl-L-alanyl-gamma-D-glutamyl-meso-2,6-diaminopimeloyl-D-alanyl-D-alanine + di-trans,octa-cis-undecaprenyl phosphate = di-trans,octa-cis-undecaprenyl diphospho-N-acetyl-alpha-D-muramoyl-L-alanyl-D-glutamyl-meso-2,6-diaminopimeloyl-D-alanyl-D-alanine + UMP. The protein operates within cell wall biogenesis; peptidoglycan biosynthesis. Its function is as follows. Catalyzes the initial step of the lipid cycle reactions in the biosynthesis of the cell wall peptidoglycan: transfers peptidoglycan precursor phospho-MurNAc-pentapeptide from UDP-MurNAc-pentapeptide onto the lipid carrier undecaprenyl phosphate, yielding undecaprenyl-pyrophosphoryl-MurNAc-pentapeptide, known as lipid I. In Pseudarthrobacter chlorophenolicus (strain ATCC 700700 / DSM 12829 / CIP 107037 / JCM 12360 / KCTC 9906 / NCIMB 13794 / A6) (Arthrobacter chlorophenolicus), this protein is Phospho-N-acetylmuramoyl-pentapeptide-transferase.